The following is a 331-amino-acid chain: Tyrosine--tRNA ligase (331 aa).

Residues Tyr31, Tyr155, Gln159, Asp162, and Gln177 each contribute to the L-tyrosine site. The short motif at 218–222 (KMSKS) is the 'KMSKS' region element. Position 221 (Lys221) interacts with ATP.

This sequence belongs to the class-I aminoacyl-tRNA synthetase family. TyrS type 4 subfamily. Homodimer.

It is found in the cytoplasm. The catalysed reaction is tRNA(Tyr) + L-tyrosine + ATP = L-tyrosyl-tRNA(Tyr) + AMP + diphosphate + H(+). Catalyzes the attachment of tyrosine to tRNA(Tyr) in a two-step reaction: tyrosine is first activated by ATP to form Tyr-AMP and then transferred to the acceptor end of tRNA(Tyr). The sequence is that of Tyrosine--tRNA ligase from Thermoplasma volcanium (strain ATCC 51530 / DSM 4299 / JCM 9571 / NBRC 15438 / GSS1).